The following is a 2352-amino-acid chain: Ectopic P granules protein 5 (2352 aa).

Disordered stretches follow at residues 1-112 (MAEL…IFPR) and 1315-1335 (KNRE…SSAK). Residues 66 to 81 (DSLKREEASEPLKDVR) are compositionally biased toward basic and acidic residues.

Belongs to the EPG5 family. Expressed in pharyngeal and body wall muscles and intestine cells.

The protein resides in the cytoplasm. It localises to the cytoplasmic vesicle. It is found in the phagosome membrane. Functionally, involved in the maturation of autophagosomes into autolysosomes during starvation-induced autotrophy. Specifically, involved in the clearance of apoptotic cells by promoting the delivery of engulfed apoptotic cells to the lysosome. This is Ectopic P granules protein 5 from Caenorhabditis elegans.